The sequence spans 146 residues: Hemoglobin subunit beta (146 aa).

The residue at position 1 (Val1) is an N-acetylvaline. In terms of domain architecture, Globin spans 2–146; sequence HLTDAEKAAV…VATALAHKYH (145 aa). Ser44 is subject to Phosphoserine. Lys59 is subject to N6-acetyllysine. His63 serves as a coordination point for heme b. The residue at position 82 (Lys82) is an N6-acetyllysine. His92 is a heme b binding site. S-nitrosocysteine is present on Cys93. Position 144 is an N6-acetyllysine (Lys144).

It belongs to the globin family. In terms of assembly, heterotetramer of two alpha chains and two beta chains. Red blood cells.

Its function is as follows. Involved in oxygen transport from the lung to the various peripheral tissues. The protein is Hemoglobin subunit beta (HBB) of Spalax ehrenbergi (Middle East blind mole rat).